The following is a 247-amino-acid chain: Small ribosomal subunit protein uS2 (247 aa).

The protein belongs to the universal ribosomal protein uS2 family.

This chain is Small ribosomal subunit protein uS2, found in Ralstonia nicotianae (strain ATCC BAA-1114 / GMI1000) (Ralstonia solanacearum).